A 447-amino-acid chain; its full sequence is Guanine nucleotide-binding protein alpha-1 subunit (447 aa).

Gly2 carries the N-myristoyl glycine lipid modification. Cys3 carries the S-palmitoyl cysteine lipid modification. One can recognise a G-alpha domain in the interval 40 to 447; the sequence is NEVKLLLLGA…QQNLKKSGIL (408 aa). The tract at residues 43–56 is G1 motif; sequence KLLLLGAGESGKST. GTP is bound by residues Glu51, Ser52, Gly53, Lys54, Ser55, Thr56, Leu269, Thr275, Gly297, Asn363, Lys364, Asp366, and Ala419. Ser55 lines the Mg(2+) pocket. The tract at residues 267 to 275 is G2 motif; it reads DILKGRIKT. A Mg(2+)-binding site is contributed by Thr275. The tract at residues 290-299 is G3 motif; it reads FKVYDAGGQR. A G4 motif region spans residues 359–366; the sequence is ILFLNKVD. Residues 417–422 form a G5 motif region; that stretch reads TCATDT.

It belongs to the G-alpha family. As to quaternary structure, g proteins are composed of 3 units; alpha, beta and gamma. The alpha chain contains the guanine nucleotide binding site. Mg(2+) serves as cofactor.

Its function is as follows. Guanine nucleotide-binding proteins (G proteins) are involved as modulators or transducers in various transmembrane signaling systems. This protein is involved in the mating response pathway. This Kluyveromyces lactis (strain ATCC 8585 / CBS 2359 / DSM 70799 / NBRC 1267 / NRRL Y-1140 / WM37) (Yeast) protein is Guanine nucleotide-binding protein alpha-1 subunit (GPA1).